Consider the following 747-residue polypeptide: Pentatricopeptide repeat-containing protein At5g39710 (747 aa).

PPR repeat units lie at residues 133-167 (TSSV…GFMP), 168-203 (GVLS…QVSP), 204-238 (NVFT…GCLP), 239-273 (NVVT…GLEP), 274-308 (NLIS…GYSL), 309-343 (DEVT…GLTP), 344-378 (SVIT…GLCP), 379-413 (NERT…GFSP), 414-448 (SVVT…GLSP), 449-483 (DVVS…GIKP), 484-518 (DTIT…GLPP), 519-553 (DEFT…GVLP), 554-588 (DVVT…ESVP), 604-638 (EFKS…NHKP), and 639-673 (DGTA…GFLL).

It belongs to the PPR family. P subfamily.

The sequence is that of Pentatricopeptide repeat-containing protein At5g39710 (EMB2745) from Arabidopsis thaliana (Mouse-ear cress).